The chain runs to 466 residues: FBD-associated F-box protein At5g22730 (466 aa).

The 54-residue stretch at 27-80 (EDLISKLPDSLITQILLYLPIKDIVRTSSLSSRWKSLWLLIPRLDLDSEEFQDY) folds into the F-box domain. In terms of domain architecture, FBD spans 385 to 436 (DEPIIFSSVPRCLVSSLESVEIKKFNGRPAKMEVARYFLENSGVLQKLVLHL).

The polypeptide is FBD-associated F-box protein At5g22730 (Arabidopsis thaliana (Mouse-ear cress)).